The primary structure comprises 234 residues: Sugar fermentation stimulation protein A (234 aa).

The H-T-H motif DNA-binding region spans 201–220 (LLTEAQQRGVEILAYKAEIS).

Belongs to the SfsA family.

Binds to DNA non-specifically. Could be a regulatory factor involved in maltose metabolism. The chain is Sugar fermentation stimulation protein A from Escherichia fergusonii (strain ATCC 35469 / DSM 13698 / CCUG 18766 / IAM 14443 / JCM 21226 / LMG 7866 / NBRC 102419 / NCTC 12128 / CDC 0568-73).